The sequence spans 531 residues: High-affinity glucose transporter ght2 (531 aa).

Over Arg-5–Met-13 the chain is Cytoplasmic. The helical transmembrane segment at Leu-14 to Val-34 threads the bilayer. The Extracellular segment spans residues Thr-35–Gln-62. Residues Gly-63 to Ile-83 traverse the membrane as a helical segment. At Ala-84 to Leu-91 the chain is on the cytoplasmic side. The chain crosses the membrane as a helical span at residues Ser-92–Pro-112. The Extracellular portion of the chain corresponds to Ser-113–Gln-116. The helical transmembrane segment at Ile-117–Gly-137 threads the bilayer. Over Tyr-138–Arg-148 the chain is Cytoplasmic. The chain crosses the membrane as a helical span at residues Gly-149–Ile-169. Over Asn-170–Arg-183 the chain is Extracellular. Residues Val-184–Pro-204 form a helical membrane-spanning segment. Residues Glu-205–Thr-270 are Cytoplasmic-facing. A helical membrane pass occupies residues Phe-271–Phe-289. Residues Tyr-290–Tyr-305 lie on the Extracellular side of the membrane. A helical transmembrane segment spans residues Leu-306–Leu-326. Residues Glu-327–Arg-332 lie on the Cytoplasmic side of the membrane. Residues Asn-333–Gly-353 traverse the membrane as a helical segment. At Ser-354–Arg-367 the chain is on the extracellular side. N-linked (GlcNAc...) asparagine glycosylation occurs at Asn-361. The chain crosses the membrane as a helical span at residues Ala-368–Ala-388. At Pro-389–Ala-408 the chain is on the cytoplasmic side. A helical membrane pass occupies residues Ala-409–Ile-429. Residues Gln-430–Lys-436 lie on the Extracellular side of the membrane. A helical transmembrane segment spans residues Tyr-437–Lys-457. Topologically, residues Glu-458–Ala-531 are cytoplasmic. Positions Lys-491 to Ala-531 are disordered. Residues Ser-507, Ser-515, Ser-519, and Ser-520 each carry the phosphoserine modification. Over residues Ala-514–Ser-524 the composition is skewed to polar residues. Tyr-523 bears the Phosphotyrosine mark.

This sequence belongs to the major facilitator superfamily. Sugar transporter (TC 2.A.1.1) family.

The protein localises to the membrane. In terms of biological role, high-affinity glucose transporter. The protein is High-affinity glucose transporter ght2 (ght2) of Schizosaccharomyces pombe (strain 972 / ATCC 24843) (Fission yeast).